A 328-amino-acid chain; its full sequence is UPF0285 protein Mevan_1551 (328 aa).

The protein belongs to the UPF0285 family.

The polypeptide is UPF0285 protein Mevan_1551 (Methanococcus vannielii (strain ATCC 35089 / DSM 1224 / JCM 13029 / OCM 148 / SB)).